The chain runs to 176 residues: Translation initiation factor IF-3 (176 aa).

It belongs to the IF-3 family. As to quaternary structure, monomer.

It is found in the cytoplasm. Functionally, IF-3 binds to the 30S ribosomal subunit and shifts the equilibrium between 70S ribosomes and their 50S and 30S subunits in favor of the free subunits, thus enhancing the availability of 30S subunits on which protein synthesis initiation begins. This Streptococcus uberis (strain ATCC BAA-854 / 0140J) protein is Translation initiation factor IF-3.